We begin with the raw amino-acid sequence, 361 residues long: Cobalt-precorrin-5B C(1)-methyltransferase (361 aa).

The protein belongs to the CbiD family.

It catalyses the reaction Co-precorrin-5B + S-adenosyl-L-methionine = Co-precorrin-6A + S-adenosyl-L-homocysteine. The protein operates within cofactor biosynthesis; adenosylcobalamin biosynthesis; cob(II)yrinate a,c-diamide from sirohydrochlorin (anaerobic route): step 6/10. Its function is as follows. Catalyzes the methylation of C-1 in cobalt-precorrin-5B to form cobalt-precorrin-6A. The chain is Cobalt-precorrin-5B C(1)-methyltransferase from Methanobrevibacter smithii (strain ATCC 35061 / DSM 861 / OCM 144 / PS).